The chain runs to 77 residues: Large ribosomal subunit protein bL31 (77 aa).

Belongs to the bacterial ribosomal protein bL31 family. Type A subfamily. Part of the 50S ribosomal subunit.

Binds the 23S rRNA. This chain is Large ribosomal subunit protein bL31, found in Paramagnetospirillum magneticum (strain ATCC 700264 / AMB-1) (Magnetospirillum magneticum).